Here is a 70-residue protein sequence, read N- to C-terminus: Large ribosomal subunit protein bL31 (70 aa).

Lys-8 is modified (N6-acetyllysine). Residues Cys-16, Cys-18, Cys-37, and Cys-40 each coordinate Zn(2+).

It belongs to the bacterial ribosomal protein bL31 family. Type A subfamily. Part of the 50S ribosomal subunit. Zn(2+) serves as cofactor.

Its function is as follows. Binds the 23S rRNA. This Shigella flexneri protein is Large ribosomal subunit protein bL31.